A 313-amino-acid chain; its full sequence is 4-diphosphocytidyl-2-C-methyl-D-erythritol kinase (313 aa).

Residue Lys-29 is part of the active site. 113-123 provides a ligand contact to ATP; that stretch reads PMGGGVGGGSS. Asp-155 is an active-site residue.

This sequence belongs to the GHMP kinase family. IspE subfamily.

It catalyses the reaction 4-CDP-2-C-methyl-D-erythritol + ATP = 4-CDP-2-C-methyl-D-erythritol 2-phosphate + ADP + H(+). It functions in the pathway isoprenoid biosynthesis; isopentenyl diphosphate biosynthesis via DXP pathway; isopentenyl diphosphate from 1-deoxy-D-xylulose 5-phosphate: step 3/6. Catalyzes the phosphorylation of the position 2 hydroxy group of 4-diphosphocytidyl-2C-methyl-D-erythritol. This Haemophilus influenzae (strain ATCC 51907 / DSM 11121 / KW20 / Rd) protein is 4-diphosphocytidyl-2-C-methyl-D-erythritol kinase.